The sequence spans 570 residues: Sulfite reductase [NADPH] hemoprotein beta-component (570 aa).

4 residues coordinate [4Fe-4S] cluster: Cys-434, Cys-440, Cys-479, and Cys-483. Cys-483 lines the siroheme pocket.

The protein belongs to the nitrite and sulfite reductase 4Fe-4S domain family. Alpha(8)-beta(8). The alpha component is a flavoprotein, the beta component is a hemoprotein. Requires siroheme as cofactor. [4Fe-4S] cluster is required as a cofactor.

It catalyses the reaction hydrogen sulfide + 3 NADP(+) + 3 H2O = sulfite + 3 NADPH + 4 H(+). The protein operates within sulfur metabolism; hydrogen sulfide biosynthesis; hydrogen sulfide from sulfite (NADPH route): step 1/1. Functionally, component of the sulfite reductase complex that catalyzes the 6-electron reduction of sulfite to sulfide. This is one of several activities required for the biosynthesis of L-cysteine from sulfate. The chain is Sulfite reductase [NADPH] hemoprotein beta-component from Cronobacter sakazakii (strain ATCC BAA-894) (Enterobacter sakazakii).